The sequence spans 1888 residues: Nuclear pore membrane glycoprotein 210-like (1888 aa).

The first 35 residues, 1–35 (MTGCPASSRRRGFGLFFFLRLHRLLLLFLVLRGTL), serve as a signal peptide directing secretion. N-linked (GlcNAc...) asparagine glycans are attached at residues Asn-84, Asn-304, Asn-348, Asn-495, Asn-522, Asn-812, and Asn-931. The BIG2 domain maps to 1082-1154 (FPPFRLLPEK…TIQTVNEDTG (73 aa)). An N-linked (GlcNAc...) asparagine glycan is attached at Asn-1445. The chain crosses the membrane as a helical span at residues 1813-1833 (ILLLTLFAVLASTASIFLAYN). An N-linked (GlcNAc...) asparagine glycan is attached at Asn-1859.

This sequence belongs to the NUP210 family.

It localises to the nucleus membrane. This is Nuclear pore membrane glycoprotein 210-like (NUP210L) from Homo sapiens (Human).